The following is a 149-amino-acid chain: Mediator of RNA polymerase II transcription subunit 9 (149 aa).

Positions 18 to 64 are disordered; that stretch reads TNPTLDKPNAEATKEEFSSAENRDEKDYLTNQQPKNLSTPSTSSNGE. Basic and acidic residues predominate over residues 25–45; it reads PNAEATKEEFSSAENRDEKDY. Residues 46-63 are compositionally biased toward polar residues; sequence LTNQQPKNLSTPSTSSNG. Short sequence motifs (nuclear localization signal) lie at residues 77–99 and 136–149; these read RKDP…HRLK and KRDV…KLQR.

The protein belongs to the Mediator complex subunit 9 family. Component of the Mediator complex, which is composed of at least 21 subunits that form three structurally distinct submodules. The Mediator head module contains MED6, MED8, MED11, SRB4/MED17, SRB5/MED18, ROX3/MED19, SRB2/MED20 and SRB6/MED22, the middle module contains MED1, MED4, NUT1/MED5, MED7, CSE2/MED9, NUT2/MED10, SRB7/MED21 and SOH1/MED31, and the tail module contains MED2, PGD1/MED3, RGR1/MED14, GAL11/MED15 and SIN4/MED16. The head and the middle modules interact directly with RNA polymerase II, whereas the elongated tail module interacts with gene-specific regulatory proteins. CSE2/MED9 interacts directly with MED4.

It is found in the nucleus. Functionally, component of the Mediator complex, a coactivator involved in the regulated transcription of nearly all RNA polymerase II-dependent genes. Mediator functions as a bridge to convey information from gene-specific regulatory proteins to the basal RNA polymerase II transcription machinery. The Mediator complex, having a compact conformation in its free form, is recruited to promoters by direct interactions with regulatory proteins and serves for the assembly of a functional preinitiation complex with RNA polymerase II and the general transcription factors. The Mediator complex unfolds to an extended conformation and partially surrounds RNA polymerase II, specifically interacting with the unphosphorylated form of the C-terminal domain (CTD) of RNA polymerase II. The Mediator complex dissociates from the RNA polymerase II holoenzyme and stays at the promoter when transcriptional elongation begins. In Saccharomyces cerevisiae (strain ATCC 204508 / S288c) (Baker's yeast), this protein is Mediator of RNA polymerase II transcription subunit 9 (CSE2).